Here is a 482-residue protein sequence, read N- to C-terminus: Tektin (482 aa).

5 coiled-coil regions span residues 100–129 (CLAE…QAKI), 171–204 (ARAV…ALRV), 282–324 (RLNE…ALTS), 376–407 (VKVA…DALR), and 441–478 (RTQT…TMGG). Residues 311-330 (EQARAKGQRSALTSALDDKR) are disordered. R462 is subject to Asymmetric dimethylarginine.

The protein belongs to the tektin family. Asymmetrically dimethylated at Arg-462 during flagellum resorption. Probably methylated by PRMT1.

The protein resides in the cytoplasm. It is found in the cytoskeleton. The protein localises to the flagellum axoneme. It localises to the flagellum basal body. Structural component of ciliary and flagellar microtubules. Plays a key role in the assembly or attachment of the inner dynein arm to microtubules in flagella and cilia. Forms filamentous polymers in the walls of ciliary and flagellar microtubules. This chain is Tektin, found in Chlamydomonas reinhardtii (Chlamydomonas smithii).